The chain runs to 69 residues: UPF0337 protein DIP1660 (69 aa).

Composition is skewed to basic and acidic residues over residues 1–19 (MSDF…KEAV) and 30–41 (DEGRADQTKADV). A disordered region spans residues 1-42 (MSDFENKIEELGGKAKEAVGEATENEQLADEGRADQTKADVK).

Belongs to the UPF0337 (CsbD) family.

This Corynebacterium diphtheriae (strain ATCC 700971 / NCTC 13129 / Biotype gravis) protein is UPF0337 protein DIP1660.